The chain runs to 131 residues: EG45-like domain containing protein (131 aa).

Positions 1–24 (MGVGTKVLVITTMAICLISSAAYA) are cleaved as a signal peptide. Positions 27–131 (GTATFYTPPY…GKIKIEFNQA (105 aa)) constitute an Expansin-like EG45; incomplete domain. A disulfide bridge links Cys-73 with Cys-85.

Expressed in the outer layer of xylem and the vascular cambial zone of roots, in shoot cambium, but not in leaves.

The protein resides in the secreted. Its function is as follows. Might have a systemic role in water and solute homeostasis. Has no expansin-like activity. This Citrus jambhiri (Rough lemon) protein is EG45-like domain containing protein (CjBAp12).